The primary structure comprises 132 residues: Nucleoid-associated protein EspR (132 aa).

Residues 38 to 50 constitute a DNA-binding region (H-T-H motif); the sequence is ITMSAPYLSQLRS.

As to quaternary structure, homodimer. Binds DNA as a dimer of dimers.

Its subcellular location is the cytoplasm. It localises to the nucleoid. Functionally, virulence regulator that has both architectural and regulatory roles. Impacts cell wall functions and pathogenesis through regulation of multiple genes. The sequence is that of Nucleoid-associated protein EspR from Mycobacterium tuberculosis (strain CDC 1551 / Oshkosh).